Reading from the N-terminus, the 495-residue chain is Soyasapogenol B glucuronide galactosyltransferase (495 aa).

An anthocyanidin contacts are provided by Thr-18 and His-20. His-20 functions as the Proton acceptor in the catalytic mechanism. The Charge relay role is filled by Asp-123. Positions 291, 349, 350, 367, 371, 372, and 375 each coordinate UDP. Residue Ala-390 coordinates an anthocyanidin.

The protein belongs to the UDP-glycosyltransferase family.

It catalyses the reaction soyasapogenol B 3-O-beta-D-glucuronate + UDP-alpha-D-galactose = soyasaponin III + UDP + H(+). Its function is as follows. Glycosyltransferase that transfers a galactosyl group from UDP-galactose to soyasapogenol B monoglucuronide in the biosynthetic pathway for soyasaponins. This Glycine max (Soybean) protein is Soyasapogenol B glucuronide galactosyltransferase (GmSGT2).